The sequence spans 1368 residues: DNA-directed RNA polymerase subunit beta (1368 aa).

Belongs to the RNA polymerase beta chain family. In terms of assembly, the RNAP catalytic core consists of 2 alpha, 1 beta, 1 beta' and 1 omega subunit. When a sigma factor is associated with the core the holoenzyme is formed, which can initiate transcription.

The enzyme catalyses RNA(n) + a ribonucleoside 5'-triphosphate = RNA(n+1) + diphosphate. Functionally, DNA-dependent RNA polymerase catalyzes the transcription of DNA into RNA using the four ribonucleoside triphosphates as substrates. This is DNA-directed RNA polymerase subunit beta from Cupriavidus necator (strain ATCC 17699 / DSM 428 / KCTC 22496 / NCIMB 10442 / H16 / Stanier 337) (Ralstonia eutropha).